The chain runs to 505 residues: Histidine ammonia-lyase (505 aa).

A cross-link (5-imidazolinone (Ala-Gly)) is located at residues 141-143 (ASG). S142 carries the 2,3-didehydroalanine (Ser) modification.

It belongs to the PAL/histidase family. Post-translationally, contains an active site 4-methylidene-imidazol-5-one (MIO), which is formed autocatalytically by cyclization and dehydration of residues Ala-Ser-Gly.

It localises to the cytoplasm. It carries out the reaction L-histidine = trans-urocanate + NH4(+). It functions in the pathway amino-acid degradation; L-histidine degradation into L-glutamate; N-formimidoyl-L-glutamate from L-histidine: step 1/3. The protein is Histidine ammonia-lyase of Bacillus cereus (strain G9842).